We begin with the raw amino-acid sequence, 428 residues long: Serine--tRNA ligase (428 aa).

231-233 contributes to the L-serine binding site; it reads TSE. Residues 262 to 264 and valine 278 contribute to the ATP site; that span reads RRE. Glutamate 285 contacts L-serine. An ATP-binding site is contributed by 349 to 352; the sequence is ELTS. Threonine 384 provides a ligand contact to L-serine.

Belongs to the class-II aminoacyl-tRNA synthetase family. Type-1 seryl-tRNA synthetase subfamily. In terms of assembly, homodimer. The tRNA molecule binds across the dimer.

Its subcellular location is the cytoplasm. It carries out the reaction tRNA(Ser) + L-serine + ATP = L-seryl-tRNA(Ser) + AMP + diphosphate + H(+). It catalyses the reaction tRNA(Sec) + L-serine + ATP = L-seryl-tRNA(Sec) + AMP + diphosphate + H(+). Its pathway is aminoacyl-tRNA biosynthesis; selenocysteinyl-tRNA(Sec) biosynthesis; L-seryl-tRNA(Sec) from L-serine and tRNA(Sec): step 1/1. In terms of biological role, catalyzes the attachment of serine to tRNA(Ser). Is also able to aminoacylate tRNA(Sec) with serine, to form the misacylated tRNA L-seryl-tRNA(Sec), which will be further converted into selenocysteinyl-tRNA(Sec). In Bifidobacterium longum (strain DJO10A), this protein is Serine--tRNA ligase.